The chain runs to 562 residues: Arginine--tRNA ligase (562 aa).

The short motif at 129 to 139 (ANPTGPLHVGH) is the 'HIGH' region element.

The protein belongs to the class-I aminoacyl-tRNA synthetase family. Monomer.

The protein localises to the cytoplasm. It catalyses the reaction tRNA(Arg) + L-arginine + ATP = L-arginyl-tRNA(Arg) + AMP + diphosphate. This chain is Arginine--tRNA ligase, found in Xanthomonas oryzae pv. oryzae (strain MAFF 311018).